A 330-amino-acid polypeptide reads, in one-letter code: DNA-directed RNA polymerase subunit alpha (330 aa).

The segment at 1-231 (MQTNLLKPKT…EQLAVFAQLE (231 aa)) is alpha N-terminal domain (alpha-NTD). The tract at residues 250–330 (FDPILLRPVD…SWPPAGLDKR (81 aa)) is alpha C-terminal domain (alpha-CTD).

Belongs to the RNA polymerase alpha chain family. Homodimer. The RNAP catalytic core consists of 2 alpha, 1 beta, 1 beta' and 1 omega subunit. When a sigma factor is associated with the core the holoenzyme is formed, which can initiate transcription.

The catalysed reaction is RNA(n) + a ribonucleoside 5'-triphosphate = RNA(n+1) + diphosphate. Functionally, DNA-dependent RNA polymerase catalyzes the transcription of DNA into RNA using the four ribonucleoside triphosphates as substrates. This chain is DNA-directed RNA polymerase subunit alpha, found in Polaromonas naphthalenivorans (strain CJ2).